The primary structure comprises 74 residues: Antimicrobial peptide 2 (74 aa).

The first 22 residues, 1–22 (MEIKYLLTVFLVLLIVSDHCQA), serve as a signal peptide directing secretion. Residue lysine 40 is modified to Lysine amide. Positions 46-74 (DLDGQIDRSRNFRKRDAELEELLSKLPIY) are excised as a propeptide.

Expressed by the venom gland.

It localises to the secreted. Its subcellular location is the target cell membrane. Its function is as follows. Has antibacterial activity against the Gram-positive bacteria S.aureus (MIC=48 uM), the Gram-negative bacteria E.coli (MIC=120 uM), and the yeast C.albicans (MIC=64 uM). Causes hemolysis on horse erythrocytes. The protein is Antimicrobial peptide 2 of Androctonus amoreuxi (African fattail scorpion).